The sequence spans 833 residues: Leucine--tRNA ligase (833 aa).

A 'HIGH' region motif is present at residues Pro-41–His-52. The 'KMSKS' region signature appears at Lys-610–Ser-614. Residue Lys-613 coordinates ATP.

Belongs to the class-I aminoacyl-tRNA synthetase family.

It is found in the cytoplasm. The catalysed reaction is tRNA(Leu) + L-leucine + ATP = L-leucyl-tRNA(Leu) + AMP + diphosphate. This Streptococcus pyogenes serotype M3 (strain ATCC BAA-595 / MGAS315) protein is Leucine--tRNA ligase.